The chain runs to 521 residues: Type-2 serine--tRNA ligase (521 aa).

Residue A316 coordinates L-serine. Zn(2+) is bound at residue C318. R347 is a binding site for L-serine. Residues 347–349 (RWE) and 358–359 (RV) contribute to the ATP site. Residue 364 to 366 (RVE) participates in L-serine binding. Zn(2+)-binding residues include E366 and C473. Residue R480 participates in ATP binding.

This sequence belongs to the class-II aminoacyl-tRNA synthetase family. Type-2 seryl-tRNA synthetase subfamily. Homodimer. Zn(2+) is required as a cofactor.

The protein localises to the cytoplasm. It carries out the reaction tRNA(Ser) + L-serine + ATP = L-seryl-tRNA(Ser) + AMP + diphosphate + H(+). The enzyme catalyses tRNA(Sec) + L-serine + ATP = L-seryl-tRNA(Sec) + AMP + diphosphate + H(+). It participates in aminoacyl-tRNA biosynthesis; selenocysteinyl-tRNA(Sec) biosynthesis; L-seryl-tRNA(Sec) from L-serine and tRNA(Sec): step 1/1. Catalyzes the attachment of serine to tRNA(Ser). Is also able to aminoacylate tRNA(Sec) with serine, to form the misacylated tRNA L-seryl-tRNA(Sec), which will be further converted into selenocysteinyl-tRNA(Sec). In Methanocaldococcus jannaschii (strain ATCC 43067 / DSM 2661 / JAL-1 / JCM 10045 / NBRC 100440) (Methanococcus jannaschii), this protein is Type-2 serine--tRNA ligase (serS).